The primary structure comprises 458 residues: GTPase Der (458 aa).

EngA-type G domains are found at residues 3–167 and 176–351; these read PVVV…PETE and IKLA…AQYT. GTP is bound by residues 9-16, 56-60, 119-122, 182-189, 229-233, and 294-297; these read GRPNVGKS, DTGGF, NKID, DTAGL, and NKWD. Residues 352 to 436 enclose the KH-like domain; the sequence is FNIKTGELNN…PIRLFFREKP (85 aa).

Belongs to the TRAFAC class TrmE-Era-EngA-EngB-Septin-like GTPase superfamily. EngA (Der) GTPase family. Associates with the 50S ribosomal subunit.

In terms of biological role, GTPase that plays an essential role in the late steps of ribosome biogenesis. This Desulfosudis oleivorans (strain DSM 6200 / JCM 39069 / Hxd3) (Desulfococcus oleovorans) protein is GTPase Der.